Consider the following 174-residue polypeptide: Translationally-controlled tumor protein homolog 1 (174 aa).

The region spanning 1–174 is the TCTP domain; the sequence is MRVFKDIVGY…FKDGLESVKY (174 aa).

It belongs to the TCTP family.

The protein resides in the cytoplasm. In terms of biological role, involved in calcium binding and microtubule stabilization. The polypeptide is Translationally-controlled tumor protein homolog 1 (Dictyostelium discoideum (Social amoeba)).